We begin with the raw amino-acid sequence, 113 residues long: Iron-sulfur cluster assembly protein CyaY (113 aa).

Belongs to the frataxin family.

In terms of biological role, involved in iron-sulfur (Fe-S) cluster assembly. May act as a regulator of Fe-S biogenesis. The protein is Iron-sulfur cluster assembly protein CyaY of Ralstonia nicotianae (strain ATCC BAA-1114 / GMI1000) (Ralstonia solanacearum).